A 175-amino-acid polypeptide reads, in one-letter code: ATP-dependent protease subunit HslV (175 aa).

Thr2 is an active-site residue. Na(+)-binding residues include Gly157, Cys160, and Thr163.

It belongs to the peptidase T1B family. HslV subfamily. A double ring-shaped homohexamer of HslV is capped on each side by a ring-shaped HslU homohexamer. The assembly of the HslU/HslV complex is dependent on binding of ATP.

It localises to the cytoplasm. The catalysed reaction is ATP-dependent cleavage of peptide bonds with broad specificity.. With respect to regulation, allosterically activated by HslU binding. Functionally, protease subunit of a proteasome-like degradation complex believed to be a general protein degrading machinery. The protein is ATP-dependent protease subunit HslV of Photobacterium profundum (strain SS9).